The following is a 75-amino-acid chain: Lividin-3 (75 aa).

Positions 1 to 22 are cleaved as a signal peptide; the sequence is MFTLKKSLLLLFFLGTISLSLC. The propeptide occupies 23–40; that stretch reads EEERDADEDEGEMTEEEV. The cysteines at positions 69 and 75 are disulfide-linked.

In terms of tissue distribution, expressed by the skin glands.

Its subcellular location is the secreted. Its function is as follows. Antimicrobial peptide. The polypeptide is Lividin-3 (Odorrana livida (Green mountain frog)).